The chain runs to 329 residues: Endonuclease 8-like 2 (329 aa).

P2 (schiff-base intermediate with DNA) is an active-site residue. The active-site Proton donor is the E3. Catalysis depends on K50, which acts as the Proton donor; for beta-elimination activity. Residue K50 is modified to N6-acetyllysine. Phosphoserine is present on S68. Positions 68-116 (SLLSEPLREGEQKDKARHHQEASDPSSWSPGGDSAVPSGDDGLQCLGGD) are disordered. Positions 73 to 89 (PLREGEQKDKARHHQEA) are enriched in basic and acidic residues. Positions 90 to 102 (SDPSSWSPGGDSA) are enriched in low complexity. Position 149 is an N6-acetyllysine (K149). N227 provides a ligand contact to DNA. An FPG-type zinc finger spans residues 280-316 (QIYQKEQCPAGHQVVRESLGPPGGFQRLTWWCPQCQP). Residue R306 is the Proton donor; for delta-elimination activity of the active site.

Belongs to the FPG family. In terms of assembly, binds EP300.

It localises to the nucleus. It catalyses the reaction 2'-deoxyribonucleotide-(2'-deoxyribose 5'-phosphate)-2'-deoxyribonucleotide-DNA = a 3'-end 2'-deoxyribonucleotide-(2,3-dehydro-2,3-deoxyribose 5'-phosphate)-DNA + a 5'-end 5'-phospho-2'-deoxyribonucleoside-DNA + H(+). With respect to regulation, acetylation of Lys-50 leads to loss of DNA nicking activity. Involved in base excision repair of DNA damaged by oxidation or by mutagenic agents. Has DNA glycosylase activity towards 5-hydroxyuracil and other oxidized derivatives of cytosine with a preference for mismatched double-stranded DNA (DNA bubbles). Has low or no DNA glycosylase activity towards thymine glycol, 2-hydroxyadenine, hypoxanthine and 8-oxoguanine. Has AP (apurinic/apyrimidinic) lyase activity and introduces nicks in the DNA strand. Cleaves the DNA backbone by beta-delta elimination to generate a single-strand break at the site of the removed base with both 3'- and 5'-phosphates. The polypeptide is Endonuclease 8-like 2 (NEIL2) (Bos taurus (Bovine)).